Here is a 336-residue protein sequence, read N- to C-terminus: D-alanine--D-alanine ligase (336 aa).

The ATP-grasp domain occupies 124–330 (KMWFSALGIP…FTEYLSLVIN (207 aa)). An ATP-binding site is contributed by 154 to 209 (ALENWGSIFVKAASQGSSVGCYKVDDSSKVADVLKDAFGYAPYVIVEKTIKARELE). Positions 284, 297, and 299 each coordinate Mg(2+).

This sequence belongs to the D-alanine--D-alanine ligase family. Mg(2+) serves as cofactor. Requires Mn(2+) as cofactor.

Its subcellular location is the cytoplasm. The catalysed reaction is 2 D-alanine + ATP = D-alanyl-D-alanine + ADP + phosphate + H(+). Its pathway is cell wall biogenesis; peptidoglycan biosynthesis. Functionally, cell wall formation. This chain is D-alanine--D-alanine ligase, found in Shewanella sp. (strain ANA-3).